Reading from the N-terminus, the 1477-residue chain is MIALSALLTKYTIGIMSNLSNGNSNNNNQQQQQQQQGQNPQQPAQNEGGAGAEFVAPPPGLGAAVGVAAMQQRNRLLQQQQQQHHHHQNPAAEGSGLERGSCLLRYASQNSLDESSQKHVQRPNGKERGTVGQYSNEQHTARSFDAMNEMRKQKQLCDVILVADDVEIHAHRMVLASCSPYFYAMFTSFEESRQARITLQSVDARALELLIDYVYTATVEVNEDNVQVLLTAANLLQLTDVRDACCDFLQTQLDASNCLGIREFADIHACVELLNYAETYIEQHFNEVIQFDEFLNLSHEQVISLIGNDRISVPNEERVYECVIAWLRYDVPMREQFTSLLMEHVRLPFLSKEYITQRVDKEILLEGNIVCKNLIIEALTYHLLPTETKSARTVPRKPVGMPKILLVIGGQAPKAIRSVEWYDLREEKWYQAAEMPNRRCRSGLSVLGDKVYAVGGFNGSLRVRTVDVYDPATDQWANCSNMEARRSTLGVAVLNGCIYAVGGFDGTTGLSSAEMYDPKTDIWRFIASMSTRRSSVGVGVVHGLLYAVGGYDGFTRQCLSSVERYNPDTDTWVNVAEMSSRRSGAGVGVLNNILYAVGGHDGPMVRRSVEAYDCETNSWRSVADMSYCRRNAGVVAHDGLLYVVGGDDGTSNLASVEVYCPDSDSWRILPALMTIGRSYAGVCMIDKPMUMEEQGALARQAASLAIALLDDENSQAEGTMEGAIGGAIYGNLAPAGGAAAAAAPAAPAQAPQPNHPHYENIYAPIGQPSNNNNNSGSNSNQAAAIANANAPANAEEIQQQQQPAPTEPNANNNPQPPTAAAPAPSQQQQQQQAQPQQPQRILPMNNYRNDLYDRSAAGGVCSAYDVPRAVRSGLGYRRNFRIDMQNGNRCGSGLRCTPLYTNSRSNCQRQRSFDDTESTDGYNLPYAGAGTMRYENIYEQIRDEPLYRTSAANRVPLYTRLDVLGHGIGRIERHLSSSCGNIDHYNLGGHYAVLGHSHFGTVGHIRLNANGSGVAAPGVAGTGTCNVPNCQGYMTAAGSTVPVEYANVKVPVKNSASSFFSCLHGENSQSMTNIYKTSGTAAAMAAHNSPLTPNVSMERASRSASAGAAGSAAAAVEEHSAADSIPSSSNINANRTTGAIPKVKTANKPAKESGGSSTAASPILDKTTSTGSGKSVTLAKKTSTAAARSSSSGDTNGNGTLNRISKSSLQWLLVNKWLPLWIGQGPDCKVIDFNFMFSRDCVSCDTASVASQMSNPYGTPRLSGLPQDMVRFQSSCAGACAAAGAASTIRRDANASARPLHSTLSRLRNGEKRNPNRVAGNYQYEDPSYENVHVQWQNGFEFGRSRDYDPNSTYHQQRPLLQRARSESPTFSNQQRRLQRQGAQAQQQSQQPKPPGSPDPYKNYKLNADNNTFKPKPIAADELEGAVGGAVAEIALPEVDIEVVDPVSLSDNETETTSSQNNLPSTTNSNNLNEHND.

Disordered regions lie at residues 19-62, 76-96, and 108-137; these read LSNG…PGLG, LLQQ…EGSG, and SQNS…YSNE. Low complexity predominate over residues 20 to 46; sequence SNGNSNNNNQQQQQQQQGQNPQQPAQN. Phosphoserine occurs at positions 108 and 111. The BTB domain maps to 157–223; that stretch reads CDVILVADDV…VYTATVEVNE (67 aa). 6 Kelch repeats span residues 404-449, 450-496, 498-543, 545-592, 594-639, and 641-687; these read ILLV…VLGD, KVYA…VLNG, IYAV…VVHG, LYAV…VLNN, LYAV…AHDG, and LYVV…MIDK. Position 690 (Sec690) is a non-standard amino acid, selenocysteine. 5 disordered regions span residues 744 to 841, 1119 to 1200, 1291 to 1326, 1359 to 1416, and 1446 to 1477; these read PAAP…PQRI, HSAA…GNGT, RDAN…QYED, PLLQ…FKPK, and PVSL…EHND. Low complexity-rich tracts occupy residues 763-813 and 820-839; these read APIG…ANNN and AAPA…QQPQ. Residues 1125-1137 are compositionally biased toward polar residues; sequence IPSSSNINANRTT. The segment covering 1166 to 1192 has biased composition (low complexity); that stretch reads KTTSTGSGKSVTLAKKTSTAAARSSSS. Composition is skewed to low complexity over residues 1374 to 1391 and 1456 to 1477; these read QQRR…QSQQ and TTSS…EHND.

As to expression, both proteins are expressed in ovaries, male testis, ovariectomized females, cuticle, salivary gland and imaginal disks. Kelch short protein is the predominant form and is also expressed in fat bodies. On entry into metamorphosis levels of full-length protein increase in testis and imaginal disks.

Its subcellular location is the cytoplasm. The protein localises to the cytoskeleton. Its function is as follows. Component of ring canals that regulates the flow of cytoplasm between cells. May be involved in the regulation of cytoplasm flow from nurse cells to the oocyte during oogenesis. Binds actin. The chain is Ring canal kelch protein (kel) from Drosophila melanogaster (Fruit fly).